The following is a 366-amino-acid chain: tRNA-specific 2-thiouridylase MnmA (366 aa).

ATP is bound by residues 6–13 (AMSGGVDS) and Leu32. The Nucleophile role is filled by Cys101. Cys101 and Cys199 are disulfide-bonded. Gly125 provides a ligand contact to ATP. Residues 148-150 (KDQ) form an interaction with tRNA region. The active-site Cysteine persulfide intermediate is the Cys199.

It belongs to the MnmA/TRMU family.

It localises to the cytoplasm. The enzyme catalyses S-sulfanyl-L-cysteinyl-[protein] + uridine(34) in tRNA + AH2 + ATP = 2-thiouridine(34) in tRNA + L-cysteinyl-[protein] + A + AMP + diphosphate + H(+). Functionally, catalyzes the 2-thiolation of uridine at the wobble position (U34) of tRNA, leading to the formation of s(2)U34. The polypeptide is tRNA-specific 2-thiouridylase MnmA (Leifsonia xyli subsp. xyli (strain CTCB07)).